The sequence spans 875 residues: MASSSATLVGSTASDLLRSSTTGFTGVPLRTLGRAGLVLKRRDLTVSVTAKLRKVKRREYPWSSNPDPNMKGGRLRHLSTFQPLKQPPKPVILEFEKPLINMEKKINDFRKVAEKTGVDLSDQILALEAKYQKALVELYTNLTPIQRVTVARHPNRPTFLDHMYNMTEKFVELHGDREGYDDPAIAAGLGSIDGKTYMFIGHQKGRDTKENIKRNFAMPTPHGYRKALRLMEYADHHGFPIVTFIDTPGAFADLKSEQLGQGEAIAHNLRSMFALKVPVISIVIGEGGSGGALAIGCANKLLMLENSVFFVAMPEACGAILWKSNKAAPKAAERLKITASALLDLEIADGIIPEPLAGAHTDPSWMSQQIKIAINEAMDELTKLSTEDLIKDRMHKFRKLGVDGIQEGIPLVPSKKVNTKKREIGVPPKRQEVPIPDSQIEAEIEKLKKAIFEGEDSSAAKKNPGSQIGSAIDKLKGLFLEGKDSSAAKKTPGSQIVAELDKLKGLYLEAKDSSAAKVPGSQIVAEIEKLKNSIFEDEDSSSAVLPEKIPGSEIAVEIAKLKKNILEGKDSSSEPSKLDLDKTIETLKREVNREFSEAVKAAGLTKTLTKLRGEISKAKAGNQPLTPLLKVEIKSFNQRLSAAPNSRKLLKKRGLLREVTKVKLLLDKNKAATRKQELKKKSDEHKEAARLEQELKKKFDEVMDTPRIKEKYEALRSEVRRVDASSGSGLDDELKKKIIEFNKEVDLELATAVKSVGLEVESVKPGHGWNKSSVPEIEELNKDVQKEIEIVANSSPNVKRLIEQLKLEVAKSGGKPDSESKSRIDALTQQIKKSLAEAVDSPSLKEKYENLTRPAGDTLTDDKLREKVGVNRNFS.

The N-terminal 50 residues, 1 to 50, are a transit peptide targeting the chloroplast; it reads MASSSATLVGSTASDLLRSSTTGFTGVPLRTLGRAGLVLKRRDLTVSVTA. The CoA carboxyltransferase C-terminal domain occupies 128–380; sequence EAKYQKALVE…KIAINEAMDE (253 aa). Residues 664-705 adopt a coiled-coil conformation; it reads LLLDKNKAATRKQELKKKSDEHKEAARLEQELKKKFDEVMDT. A disordered region spans residues 845 to 875; sequence KEKYENLTRPAGDTLTDDKLREKVGVNRNFS. Positions 860–869 are enriched in basic and acidic residues; sequence TDDKLREKVG.

It belongs to the AccA family. Acetyl-CoA carboxylase is a heterohexamer composed of biotin carboxyl carrier protein, biotin carboxylase and two subunits each of ACCase subunit alpha and ACCase plastid-coded subunit beta (accD).

It localises to the plastid. The protein localises to the chloroplast inner membrane. It catalyses the reaction N(6)-carboxybiotinyl-L-lysyl-[protein] + acetyl-CoA = N(6)-biotinyl-L-lysyl-[protein] + malonyl-CoA. It participates in lipid metabolism; malonyl-CoA biosynthesis; malonyl-CoA from acetyl-CoA: step 1/1. With respect to regulation, activated by reductants such as dithiothreitol (DTT), and by thioredoxin in vivo, following exposure to light. Functionally, component of the acetyl coenzyme A carboxylase (ACC) complex. First, biotin carboxylase catalyzes the carboxylation of biotin on its carrier protein (BCCP) and then the CO(2) group is transferred by the carboxyltransferase to acetyl-CoA to form malonyl-CoA. This is Acetyl-coenzyme A carboxylase carboxyl transferase subunit alpha, chloroplastic (ACCA) from Pisum sativum (Garden pea).